Here is a 1117-residue protein sequence, read N- to C-terminus: Reverse gyrase (1117 aa).

The RG N-terminal-type zinc finger occupies 3–42; that stretch reads LATGAKYYHSCINCGGINTDTRNEKGLPCEVCLPFEDGDV. Zn(2+)-binding residues include Cys13, Cys16, Cys31, and Cys34. Residues Gln84 and 101–108 contribute to the ATP site; that span reads APTGVGKT. Residues 88–284 form the Helicase ATP-binding domain; sequence AKRLLLSKSF…LFRELLGFEI (197 aa). A DEAD box motif is present at residues 206-209; the sequence is DDVD. The segment at 551 to 1117 is topoisomerase I; the sequence is KDMKSRMIIV…EELNEILIKN (567 aa). Residues 555 to 712 form the Toprim domain; it reads SRMIIVESPT…NVQRIEMHEI (158 aa). Glu561 is a binding site for Mg(2+). The RG C-terminal-type zinc finger occupies 631–658; the sequence is IKRCSSCGAQFTDELPRCPYCNSDKIDD. Zn(2+) contacts are provided by Cys634, Cys637, Cys648, and Cys651. Asp681 lines the Mg(2+) pocket. The 387-residue stretch at 728–1114 folds into the Topo IA-type catalytic domain; sequence DVNLVKSQIV…NLYEELNEIL (387 aa). The active-site O-(5'-phospho-DNA)-tyrosine intermediate is Tyr864.

It in the N-terminal section; belongs to the DEAD box helicase family. DDVD subfamily. The protein in the C-terminal section; belongs to the type IA topoisomerase family. Monomer. Zn(2+) serves as cofactor. It depends on Mg(2+) as a cofactor.

The protein localises to the cytoplasm. The enzyme catalyses ATP + H2O = ADP + phosphate + H(+). Its function is as follows. Modifies the topological state of DNA by introducing positive supercoils in an ATP-dependent process, increasing the linking number in steps of +1; also positively supercoils with dATP and ATP-gamma-S. With UTP or dTTP relaxes negatively supercoiled DNA, in the absence of any nucleotide partially relaxes negative supercoils. In the absence of nucleotide has a higher affinity for dsDNA with a single-stranded tail than dsDNA or ssDNA. Has an ATPase activity in the absence of DNA. Binds to single-stranded DNA, transiently cleaves and then rejoins the ends, introducing a positive supercoil in the process. The scissile phosphodiester is attacked by the catalytic tyrosine of the enzyme, resulting in the formation of a DNA-(5'-phosphotyrosyl)-enzyme intermediate. Probably involved in rewinding DNA strands in regions of the chromosome that have opened up to allow replication, transcription, DNA repair and/or for DNA protection. In Caldanaerobacter subterraneus subsp. tengcongensis (strain DSM 15242 / JCM 11007 / NBRC 100824 / MB4) (Thermoanaerobacter tengcongensis), this protein is Reverse gyrase.